The chain runs to 126 residues: Fluoride-specific ion channel FluC (126 aa).

A run of 4 helical transmembrane segments spans residues 3-23 (MILA…LTGV), 39-59 (TVNV…AHVW), 71-91 (VGVL…ALLV), and 101-121 (AYVA…LALI). Na(+) is bound by residues Gly75 and Thr78.

This sequence belongs to the fluoride channel Fluc/FEX (TC 1.A.43) family.

It localises to the cell inner membrane. It carries out the reaction fluoride(in) = fluoride(out). Its activity is regulated as follows. Na(+) is not transported, but it plays an essential structural role and its presence is essential for fluoride channel function. Its function is as follows. Fluoride-specific ion channel. Important for reducing fluoride concentration in the cell, thus reducing its toxicity. This is Fluoride-specific ion channel FluC from Rhodospirillum centenum (strain ATCC 51521 / SW).